The sequence spans 92 residues: Small ribosomal subunit protein uS19c (92 aa).

It belongs to the universal ribosomal protein uS19 family.

The protein resides in the plastid. It is found in the chloroplast. Functionally, protein S19 forms a complex with S13 that binds strongly to the 16S ribosomal RNA. This is Small ribosomal subunit protein uS19c (rps19) from Trieres chinensis (Marine centric diatom).